We begin with the raw amino-acid sequence, 337 residues long: DNA-directed RNA polymerase subunit alpha (337 aa).

An alpha N-terminal domain (alpha-NTD) region spans residues 1-233; that stretch reads MVREKVTVST…DLFIPFLHME (233 aa). The interval 265–337 is alpha C-terminal domain (alpha-CTD); the sequence is KKIALKSIFI…FVIDLAKNKF (73 aa).

Belongs to the RNA polymerase alpha chain family. In plastids the minimal PEP RNA polymerase catalytic core is composed of four subunits: alpha, beta, beta', and beta''. When a (nuclear-encoded) sigma factor is associated with the core the holoenzyme is formed, which can initiate transcription.

It localises to the plastid. Its subcellular location is the chloroplast. The catalysed reaction is RNA(n) + a ribonucleoside 5'-triphosphate = RNA(n+1) + diphosphate. Functionally, DNA-dependent RNA polymerase catalyzes the transcription of DNA into RNA using the four ribonucleoside triphosphates as substrates. This is DNA-directed RNA polymerase subunit alpha from Solanum lycopersicum (Tomato).